A 104-amino-acid chain; its full sequence is Gastrin (104 aa).

The first 21 residues, 1 to 21 (MPRLCVCMLVLVLALATFSEA), serve as a signal peptide directing secretion. A propeptide spanning residues 22-58 (SWKPRSQLQDASSGPRTNGALEQHQLEKLGPASHHRR) is cleaved from the precursor. Positions 23-104 (WKPRSQLQDA…RSAEEEDQYN (82 aa)) are disordered. Over residues 25 to 37 (PRSQLQDASSGPR) the composition is skewed to polar residues. Sulfotyrosine is present on Tyr-87. Phenylalanine amide is present on Phe-92. Ser-96 carries the phosphoserine modification. Residues 96-104 (SAEEEDQYN) constitute a propeptide that is removed on maturation. Tyr-103 bears the Sulfotyrosine mark.

It belongs to the gastrin/cholecystokinin family. Post-translationally, sulfation on Tyr-87 enhances proteolytic processing, and blocks peptide degradation. Levels of sulfation differ between proteolytically-cleaved gastrins and between tissues.

It localises to the secreted. Gastrin stimulates the stomach mucosa to produce and secrete hydrochloric acid and the pancreas to secrete its digestive enzymes. It also stimulates smooth muscle contraction and increases blood circulation and water secretion in the stomach and intestine. This is Gastrin (Gast) from Rattus norvegicus (Rat).